Here is a 115-residue protein sequence, read N- to C-terminus: T cell receptor beta variable 7-7 (115 aa).

The signal sequence occupies residues 1–21; that stretch reads MGTSLLCWVVLGFLGTDHTGA. Residues 22 to 115 enclose the Ig-like domain; the sequence is GVSQSPRYKV…SAMYRCASSL (94 aa). Cys-42 and Cys-111 form a disulfide bridge.

Alpha-beta TR is a heterodimer composed of an alpha and beta chain; disulfide-linked. The alpha-beta TR is associated with the transmembrane signaling CD3 coreceptor proteins to form the TR-CD3 (TcR or TCR). The assembly of alpha-beta TR heterodimers with CD3 occurs in the endoplasmic reticulum where a single alpha-beta TR heterodimer associates with one CD3D-CD3E heterodimer, one CD3G-CD3E heterodimer and one CD247 homodimer forming a stable octameric structure. CD3D-CD3E and CD3G-CD3E heterodimers preferentially associate with TR alpha and TR beta chains, respectively. The association of the CD247 homodimer is the last step of TcR assembly in the endoplasmic reticulum and is required for transport to the cell surface.

The protein localises to the cell membrane. Its function is as follows. V region of the variable domain of T cell receptor (TR) beta chain that participates in the antigen recognition. Alpha-beta T cell receptors are antigen specific receptors which are essential to the immune response and are present on the cell surface of T lymphocytes. Recognize peptide-major histocompatibility (MH) (pMH) complexes that are displayed by antigen presenting cells (APC), a prerequisite for efficient T cell adaptive immunity against pathogens. Binding of alpha-beta TR to pMH complex initiates TR-CD3 clustering on the cell surface and intracellular activation of LCK that phosphorylates the ITAM motifs of CD3G, CD3D, CD3E and CD247 enabling the recruitment of ZAP70. In turn ZAP70 phosphorylates LAT, which recruits numerous signaling molecules to form the LAT signalosome. The LAT signalosome propagates signal branching to three major signaling pathways, the calcium, the mitogen-activated protein kinase (MAPK) kinase and the nuclear factor NF-kappa-B (NF-kB) pathways, leading to the mobilization of transcription factors that are critical for gene expression and essential for T cell growth and differentiation. The T cell repertoire is generated in the thymus, by V-(D)-J rearrangement. This repertoire is then shaped by intrathymic selection events to generate a peripheral T cell pool of self-MH restricted, non-autoaggressive T cells. Post-thymic interaction of alpha-beta TR with the pMH complexes shapes TR structural and functional avidity. The protein is T cell receptor beta variable 7-7 of Homo sapiens (Human).